The sequence spans 456 residues: MSGFDRRSFLKASMVTAAATALAACASSERATGTTPKAAGKSVMGLVVPKMDEVRVGLIGVGERGIGFVHHFSRIEGARITAICDTDTLVLARAEKAINEYGRDKPAYFSKGDHAYRDLLNRDDVDIVVIATPWAWHHPMAKEAMLAGKHAFVEVPMAGTIEELWDLVDTAELTQRNCMMMENVCYGRDELMVLNMVRQGLFGELLHGEAAYIHELRWQMKEIDRKTGSWRTAYHAKYNGNLYPTHGLGPVAQYMNINRGDRLDYLTSVSSPSLGRAAYAKREFPADHQRNQLKYIGGDMNTSLIKTVKGRSIMVQHDTTTPRPYSRHNLIQGTNGVFGGFPNRIALENGGSGSYHEWDENMDSWYAKYDHPLWTRMGKEAEENGGHGGMDFLMCWRMIYCLRNGEALDQDVYDGAAWSAVFPLSVASVGDRGNSKDFPDFTRGVWQTAKPLGIVG.

Positions 1 to 33 (MSGFDRRSFLKASMVTAAATALAACASSERATG) form a signal peptide, tat-type signal. NAD(+) is bound by residues 63-64 (ER), Asp-85, 134-137 (WAWH), 154-155 (EV), and Asn-183. Residues Tyr-212, Arg-231, 243–246 (YPTH), and Tyr-325 each bind substrate. Tyr-243 contacts NAD(+).

Belongs to the Gfo/Idh/MocA family. Glycosyl hydrolase 109 subfamily. Requires NAD(+) as cofactor. Post-translationally, predicted to be exported by the Tat system. The position of the signal peptide cleavage has not been experimentally proven.

Functionally, glycosidase. The polypeptide is Glycosyl hydrolase family 109 protein 2 (Shewanella sp. (strain MR-4)).